The sequence spans 172 residues: Ribosome maturation factor RimM (172 aa).

A PRC barrel domain is found at 99-171; it reads DDIPTWNYFI…LLTVEVPDGL (73 aa).

It belongs to the RimM family. As to quaternary structure, binds ribosomal protein uS19.

Its subcellular location is the cytoplasm. Its function is as follows. An accessory protein needed during the final step in the assembly of 30S ribosomal subunit, possibly for assembly of the head region. Essential for efficient processing of 16S rRNA. May be needed both before and after RbfA during the maturation of 16S rRNA. It has affinity for free ribosomal 30S subunits but not for 70S ribosomes. This is Ribosome maturation factor RimM from Phocaeicola vulgatus (strain ATCC 8482 / DSM 1447 / JCM 5826 / CCUG 4940 / NBRC 14291 / NCTC 11154) (Bacteroides vulgatus).